The chain runs to 1273 residues: Clustered mitochondria protein homolog (1273 aa).

A Clu domain is found at 344-599; that stretch reads PANNADYSRM…NTYPLDVKFA (256 aa). TPR repeat units lie at residues 981 to 1013, 1022 to 1055, and 1151 to 1184; these read SDQK…KEEV, AEKY…YERV, and ATLE…FTRE. 2 disordered regions span residues 1217-1242 and 1254-1273; these read AEQA…KAEL and IEGG…KGKK. Residues 1262-1273 are compositionally biased toward basic residues; sequence SKKKSSKKKGKK.

Belongs to the CLU family. May associate with the eukaryotic translation initiation factor 3 (eIF-3) complex.

It localises to the cytoplasm. Its function is as follows. mRNA-binding protein involved in proper cytoplasmic distribution of mitochondria. This Vanderwaltozyma polyspora (strain ATCC 22028 / DSM 70294 / BCRC 21397 / CBS 2163 / NBRC 10782 / NRRL Y-8283 / UCD 57-17) (Kluyveromyces polysporus) protein is Clustered mitochondria protein homolog.